Here is a 253-residue protein sequence, read N- to C-terminus: Triosephosphate isomerase, cytosolic (253 aa).

Substrate-binding residues include Asn10 and Lys12. The active-site Electrophile is the His96. Glu166 serves as the catalytic Proton acceptor.

Belongs to the triosephosphate isomerase family. As to quaternary structure, homodimer. In terms of tissue distribution, starchy endosperm.

The protein resides in the cytoplasm. It carries out the reaction D-glyceraldehyde 3-phosphate = dihydroxyacetone phosphate. The protein operates within carbohydrate biosynthesis; gluconeogenesis. It participates in carbohydrate degradation; glycolysis; D-glyceraldehyde 3-phosphate from glycerone phosphate: step 1/1. The polypeptide is Triosephosphate isomerase, cytosolic (Hordeum vulgare (Barley)).